A 112-amino-acid polypeptide reads, in one-letter code: UPF0102 protein NIS_1551 (112 aa).

The protein belongs to the UPF0102 family.

The chain is UPF0102 protein NIS_1551 from Nitratiruptor sp. (strain SB155-2).